The sequence spans 282 residues: Acetyl-coenzyme A carboxylase carboxyl transferase subunit beta (282 aa).

The CoA carboxyltransferase N-terminal domain maps to leucine 29–glycine 282. 4 residues coordinate Zn(2+): cysteine 33, cysteine 36, cysteine 52, and cysteine 55. The C4-type zinc finger occupies cysteine 33 to cysteine 55.

It belongs to the AccD/PCCB family. In terms of assembly, acetyl-CoA carboxylase is a heterohexamer composed of biotin carboxyl carrier protein (AccB), biotin carboxylase (AccC) and two subunits each of ACCase subunit alpha (AccA) and ACCase subunit beta (AccD). Zn(2+) is required as a cofactor.

It is found in the cytoplasm. It catalyses the reaction N(6)-carboxybiotinyl-L-lysyl-[protein] + acetyl-CoA = N(6)-biotinyl-L-lysyl-[protein] + malonyl-CoA. It functions in the pathway lipid metabolism; malonyl-CoA biosynthesis; malonyl-CoA from acetyl-CoA: step 1/1. In terms of biological role, component of the acetyl coenzyme A carboxylase (ACC) complex. Biotin carboxylase (BC) catalyzes the carboxylation of biotin on its carrier protein (BCCP) and then the CO(2) group is transferred by the transcarboxylase to acetyl-CoA to form malonyl-CoA. The chain is Acetyl-coenzyme A carboxylase carboxyl transferase subunit beta from Syntrophomonas wolfei subsp. wolfei (strain DSM 2245B / Goettingen).